We begin with the raw amino-acid sequence, 638 residues long: Terrein cluster-specific transcription factor terR (638 aa).

The segment at residues 50–76 (CDMCKSKKVRCDGGTPCSYCNLHDLRC) is a DNA-binding region (zn(2)-C6 fungal-type).

Its subcellular location is the nucleus. In terms of biological role, transcription factor that regulates specifically the terrein biosynthesis gene cluster. Recognizes CGG direct repeat consensus sequences in the terrein cluster forming the high affinity consensus motif TCGGHHWYHCGGH. This chain is Terrein cluster-specific transcription factor terR, found in Aspergillus terreus (strain NIH 2624 / FGSC A1156).